Here is a 689-residue protein sequence, read N- to C-terminus: Translation initiation factor IF-2 (689 aa).

The segment at 41-109 is disordered; sequence DYERVFGGGN…EAPAAEEREA (69 aa). Residues 61-70 show a composition bias toward basic residues; sequence RKGRQKKRRR. Residues 80-94 are compositionally biased toward low complexity; that stretch reads RGPRAAAPSRPSRGR. The segment covering 96-109 has biased composition (basic and acidic residues); it reads AAREEAPAAEEREA. The tr-type G domain maps to 192 to 361; it reads EKPPVITVMG…LVVAELEELR (170 aa). A G1 region spans residues 201-208; it reads GHVDHGKT. GTP is bound at residue 201–208; sequence GHVDHGKT. The tract at residues 226-230 is G2; the sequence is GITQH. The segment at 247-250 is G3; the sequence is DTPG. GTP contacts are provided by residues 247-251 and 301-304; these read DTPGH and NKID. Residues 301-304 form a G4 region; that stretch reads NKID. The tract at residues 337–339 is G5; sequence SAK.

This sequence belongs to the TRAFAC class translation factor GTPase superfamily. Classic translation factor GTPase family. IF-2 subfamily.

It is found in the cytoplasm. Its function is as follows. One of the essential components for the initiation of protein synthesis. Protects formylmethionyl-tRNA from spontaneous hydrolysis and promotes its binding to the 30S ribosomal subunits. Also involved in the hydrolysis of GTP during the formation of the 70S ribosomal complex. This Rubrobacter xylanophilus (strain DSM 9941 / JCM 11954 / NBRC 16129 / PRD-1) protein is Translation initiation factor IF-2.